The chain runs to 474 residues: L-arabinose isomerase (474 aa).

4 residues coordinate Mn(2+): Glu306, Glu331, His348, and His447.

Belongs to the arabinose isomerase family. Requires Mn(2+) as cofactor.

It catalyses the reaction beta-L-arabinopyranose = L-ribulose. It functions in the pathway carbohydrate degradation; L-arabinose degradation via L-ribulose; D-xylulose 5-phosphate from L-arabinose (bacterial route): step 1/3. Catalyzes the conversion of L-arabinose to L-ribulose. This Oceanobacillus iheyensis (strain DSM 14371 / CIP 107618 / JCM 11309 / KCTC 3954 / HTE831) protein is L-arabinose isomerase.